The chain runs to 382 residues: Lipid-A-disaccharide synthase (382 aa).

Belongs to the LpxB family.

The enzyme catalyses 2-N,3-O-bis[(3R)-3-hydroxytetradecanoyl]-alpha-D-glucosaminyl 1-phosphate + UDP-2-N,3-O-bis[(3R)-3-hydroxytetradecanoyl]-alpha-D-glucosamine = lipid A disaccharide (E. coli) + UDP + H(+). It carries out the reaction a lipid X + a UDP-2-N,3-O-bis[(3R)-3-hydroxyacyl]-alpha-D-glucosamine = a lipid A disaccharide + UDP + H(+). Its pathway is glycolipid biosynthesis; lipid IV(A) biosynthesis; lipid IV(A) from (3R)-3-hydroxytetradecanoyl-[acyl-carrier-protein] and UDP-N-acetyl-alpha-D-glucosamine: step 5/6. In terms of biological role, condensation of UDP-2,3-diacylglucosamine and 2,3-diacylglucosamine-1-phosphate to form lipid A disaccharide, a precursor of lipid A, a phosphorylated glycolipid that anchors the lipopolysaccharide to the outer membrane of the cell. This is Lipid-A-disaccharide synthase from Citrobacter koseri (strain ATCC BAA-895 / CDC 4225-83 / SGSC4696).